A 60-amino-acid polypeptide reads, in one-letter code: Sec-independent protein translocase protein TatA (60 aa).

A helical transmembrane segment spans residues 1–21; sequence MAGLGVTELLIILAIVIVLFG.

This sequence belongs to the TatA/E family. Forms a complex with TatC.

The protein localises to the cell membrane. In terms of biological role, part of the twin-arginine translocation (Tat) system that transports large folded proteins containing a characteristic twin-arginine motif in their signal peptide across membranes. TatA could form the protein-conducting channel of the Tat system. The chain is Sec-independent protein translocase protein TatA from Herpetosiphon aurantiacus (strain ATCC 23779 / DSM 785 / 114-95).